The primary structure comprises 30 residues: Vitri peptide A (30 aa).

The segment at residues 1 to 30 is a cross-link (cyclopeptide (Gly-Asn)); the sequence is GIPCGESCVWIPCITSAIGCSCKSKVCYRN. Cystine bridges form between cysteine 4-cysteine 20, cysteine 8-cysteine 22, and cysteine 13-cysteine 27.

In terms of processing, this is a cyclic peptide.

In terms of biological role, probably participates in a plant defense mechanism. Has strong cytotoxic activity against human lymphoma U-937 GTB and human myeloma RPMI-8226/s cell lines. In Viola arvensis (European field pansy), this protein is Vitri peptide A.